The primary structure comprises 214 residues: Peptidyl-tRNA hydrolase (214 aa).

Tyr-14 provides a ligand contact to tRNA. His-19 functions as the Proton acceptor in the catalytic mechanism. Residues Tyr-64, Asn-66, and Asn-113 each contribute to the tRNA site. The disordered stretch occupies residues 184–214 (RINAPPPKPEKKRGSETSDPSAESADHAGGG).

Belongs to the PTH family. In terms of assembly, monomer.

It localises to the cytoplasm. The catalysed reaction is an N-acyl-L-alpha-aminoacyl-tRNA + H2O = an N-acyl-L-amino acid + a tRNA + H(+). Its function is as follows. Hydrolyzes ribosome-free peptidyl-tRNAs (with 1 or more amino acids incorporated), which drop off the ribosome during protein synthesis, or as a result of ribosome stalling. Catalyzes the release of premature peptidyl moieties from peptidyl-tRNA molecules trapped in stalled 50S ribosomal subunits, and thus maintains levels of free tRNAs and 50S ribosomes. The polypeptide is Peptidyl-tRNA hydrolase (Roseiflexus castenholzii (strain DSM 13941 / HLO8)).